We begin with the raw amino-acid sequence, 155 residues long: Snaclec bothrojaracin subunit alpha (155 aa).

Residues M1–A23 form the signal peptide. 3 disulfide bridges follow: C25-C36, C53-C150, and C125-C142. The C-type lectin domain occupies H32–K151.

The protein belongs to the snaclec family. As to quaternary structure, heterodimer of subunits alpha and beta; disulfide-linked. In terms of tissue distribution, expressed by the venom gland.

It is found in the secreted. In terms of biological role, this potent antithrombotic agent acts in a calcium-independent manner. Exerts its anticoagulant effect by two distinct mechanisms. It binds to activated thrombin through exosite 1, blocking fibrinogen clotting, platelet activation, factor V activation and other effects, and it interacts with prothrombin (F2), decreasing its proteolytic activation -especially in the presence of factor Va. In vivo, intravenous injection before thrombosis induction causes a significant decrease in thrombus weight. Furthermore, BJC shows a prolonged effect by remaining in the plasma bound to prothrombin for at least 12 hours. This is Snaclec bothrojaracin subunit alpha from Bothrops jararaca (Jararaca).